The following is a 414-amino-acid chain: tRNA(Ile)-lysidine synthase (414 aa).

17-22 (SGGCDS) contacts ATP.

This sequence belongs to the tRNA(Ile)-lysidine synthase family.

It localises to the cytoplasm. The catalysed reaction is cytidine(34) in tRNA(Ile2) + L-lysine + ATP = lysidine(34) in tRNA(Ile2) + AMP + diphosphate + H(+). Its function is as follows. Ligates lysine onto the cytidine present at position 34 of the AUA codon-specific tRNA(Ile) that contains the anticodon CAU, in an ATP-dependent manner. Cytidine is converted to lysidine, thus changing the amino acid specificity of the tRNA from methionine to isoleucine. The polypeptide is tRNA(Ile)-lysidine synthase (Exiguobacterium sibiricum (strain DSM 17290 / CCUG 55495 / CIP 109462 / JCM 13490 / 255-15)).